The chain runs to 743 residues: 1,4-alpha-glucan branching enzyme GlgB (743 aa).

Asp416 acts as the Nucleophile in catalysis. The active-site Proton donor is Glu469.

It belongs to the glycosyl hydrolase 13 family. GlgB subfamily. Monomer.

The catalysed reaction is Transfers a segment of a (1-&gt;4)-alpha-D-glucan chain to a primary hydroxy group in a similar glucan chain.. It functions in the pathway glycan biosynthesis; glycogen biosynthesis. Functionally, catalyzes the formation of the alpha-1,6-glucosidic linkages in glycogen by scission of a 1,4-alpha-linked oligosaccharide from growing alpha-1,4-glucan chains and the subsequent attachment of the oligosaccharide to the alpha-1,6 position. The sequence is that of 1,4-alpha-glucan branching enzyme GlgB from Shewanella baltica (strain OS195).